A 464-amino-acid polypeptide reads, in one-letter code: Cysteine--tRNA ligase (464 aa).

Cys28 lines the Zn(2+) pocket. Positions 30-40 (PTVYDHSHIGH) match the 'HIGH' region motif. 3 residues coordinate Zn(2+): Cys205, His230, and Glu234. Residues 263–267 (KMSKS) carry the 'KMSKS' region motif. Residue Lys266 participates in ATP binding.

This sequence belongs to the class-I aminoacyl-tRNA synthetase family. Zn(2+) is required as a cofactor.

Its subcellular location is the cytoplasm. The catalysed reaction is tRNA(Cys) + L-cysteine + ATP = L-cysteinyl-tRNA(Cys) + AMP + diphosphate. The polypeptide is Cysteine--tRNA ligase (Ignicoccus hospitalis (strain KIN4/I / DSM 18386 / JCM 14125)).